A 554-amino-acid chain; its full sequence is Protein PNS1 (554 aa).

Composition is skewed to low complexity over residues 1-19 and 27-45; these read MSGP…NNNN and SYQM…QPQY. The segment at 1–90 is disordered; it reads MSGPQYGAQP…TDGYGGPPPS (90 aa). Residues 1–105 lie on the Cytoplasmic side of the membrane; the sequence is MSGPQYGAQP…KVQKPKYNDW (105 aa). Pro residues predominate over residues 68-90; that stretch reads PQGPPPNGSKPPPTDGYGGPPPS. The helical transmembrane segment at 106-126 threads the bilayer; it reads WAGLLFLATVAGFVAVSAISI. The Extracellular portion of the chain corresponds to 127-153; that stretch reads HGYADNRSQNNGSLNGQRNTFGLTTHT. N-linked (GlcNAc...) asparagine glycans are attached at residues Asn132 and Asn137. A helical transmembrane segment spans residues 154-174; sequence IYLFVWVLICAIVLSYAYMWM. Topologically, residues 175-181 are cytoplasmic; it reads ARKFTKQ. Residues 182–202 traverse the membrane as a helical segment; sequence FIYATGILNIVMGLVTALYML. The Extracellular portion of the chain corresponds to 203-206; that stretch reads SRKY. A helical membrane pass occupies residues 207–227; it reads WSGGIVFLIFVVLQALFFWSC. Residues 228-255 are Cytoplasmic-facing; the sequence is RSRIPFSTLMLQTAIDVSKVHGHVYLVS. Residues 256-276 form a helical membrane-spanning segment; it reads AVGGVIGTLFAAYWAITLVAV. Over 277-297 the chain is Extracellular; the sequence is YVKFEPDPNNAACRNAGGCSS. Residues 298–318 form a helical membrane-spanning segment; it reads GKVIGLIVFITFAGYWISEWL. Residues 319-352 lie on the Cytoplasmic side of the membrane; it reads KNTIHTTVAGIYGSWYFNSRNYPTKVTRGALKRS. A helical membrane pass occupies residues 353–373; it reads LTYSFGSISLGSLFIAIINLI. The Extracellular portion of the chain corresponds to 374-389; sequence RQLAQAAQQNAAQEGD. A helical transmembrane segment spans residues 390 to 410; that stretch reads ILGTILWCIFGCLIGILDWLV. Over 411–451 the chain is Cytoplasmic; sequence EFINRYAFCHIALYGKAYFAAAKDTWKMVKDRGIDALINEC. A helical transmembrane segment spans residues 452 to 472; that stretch reads LIGPVLTFGATFVAYACGLIA. At 473–487 the chain is on the extracellular side; that stretch reads YLYMVYTKPAYNDGG. The chain crosses the membrane as a helical span at residues 488–508; the sequence is GFTPVVVAFAFLIGLQVCNVF. Over 509–554 the chain is Cytoplasmic; sequence TTPLTSGIDTIFVAMAWDPEVLMRDHPDLYHRMVQVYPHVQEAIHA.

Belongs to the CTL (choline transporter-like) family.

The protein resides in the cell membrane. Functionally, probably involved in transport through the plasma membrane. This is Protein PNS1 (pns-1) from Neurospora crassa (strain ATCC 24698 / 74-OR23-1A / CBS 708.71 / DSM 1257 / FGSC 987).